The sequence spans 103 residues: Co-chaperonin GroES (103 aa).

It belongs to the GroES chaperonin family. As to quaternary structure, heptamer of 7 subunits arranged in a ring. Interacts with the chaperonin GroEL.

Its subcellular location is the cytoplasm. Together with the chaperonin GroEL, plays an essential role in assisting protein folding. The GroEL-GroES system forms a nano-cage that allows encapsulation of the non-native substrate proteins and provides a physical environment optimized to promote and accelerate protein folding. GroES binds to the apical surface of the GroEL ring, thereby capping the opening of the GroEL channel. The chain is Co-chaperonin GroES from Prochlorococcus marinus (strain SARG / CCMP1375 / SS120).